The sequence spans 320 residues: Probable cell division protein WhiA (320 aa).

Positions 276 to 310 (TLKELGELVSGGKISKSGINHRLRKIDEIAERLRA) form a DNA-binding region, H-T-H motif.

This sequence belongs to the WhiA family.

Its function is as follows. Involved in cell division and chromosome segregation. This Geobacillus sp. (strain WCH70) protein is Probable cell division protein WhiA.